A 334-amino-acid polypeptide reads, in one-letter code: MSQSKGKKRNPGLKIPKEAFEQPQTSSTPPRDLDSKACISIGNQNFEVKADDLEPIMELGRGAYGVVEKMRHVPSGQIMAVKRIRATVNSQEQKRLLMDLDISMRTVDCPFTVTFYGALFREGDVWICMELMDTSLDKFYKQVIDKGQTIPEDILGKIAVSIVKALEHLHSKLSVIHRDVKPSNVLINALGQVKMCDFGISGYLVDSVAKTIDAGCKPYMAPERINPELNQKGYSVKSDIWSLGITMIELAILRFPYDSWGTPFQQLKQVVEEPSPQLPADKFSAEFVDFTSQCLKKNSKERPTYPELMQHPFFTLHESKGTDVASFVKLILGD.

A compositionally biased stretch (basic residues) spans 1-11 (MSQSKGKKRNP). The disordered stretch occupies residues 1 to 34 (MSQSKGKKRNPGLKIPKEAFEQPQTSSTPPRDLD). A d domain region spans residues 4–19 (SKGKKRNPGLKIPKEA). Positions 53-314 (LEPIMELGRG…YPELMQHPFF (262 aa)) constitute a Protein kinase domain. Residues 59–67 (LGRGAYGVV) and Lys-82 each bind ATP. The active-site Proton acceptor is the Asp-179. Residue Ser-207 is modified to (Microbial infection) O-acetylserine; by Yersinia YopJ; alternate. Phosphoserine; by MAP3K; alternate is present on Ser-207. Position 211 is a (Microbial infection) O-acetylthreonine; by Yersinia YopJ; alternate (Thr-211). The residue at position 211 (Thr-211) is a Phosphothreonine; by MAP3K; alternate. Residues 311 to 334 (HPFFTLHESKGTDVASFVKLILGD) form a DVD domain region.

This sequence belongs to the protein kinase superfamily. STE Ser/Thr protein kinase family. MAP kinase kinase subfamily. As to quaternary structure, dimer. Interacts (via its D domain) with its substrates MAPK11, MAPK12, MAPK13 and MAPK14. Interacts (via its DVD domain) with MAP3Ks activators like MAP3K5/ASK1, MAP3K1/MEKK1, MAP3K2/MEKK2, MAP3K3/MEKK3, MAP3K4/MEKK4, MAP3K7/TAK1, MAP3K11/MLK3 and MAP3K17/TAOK2. Interacts with DCTN1. Interacts with EIF2AK2/PKR. (Microbial infection) Interacts with Yersinia YopJ. Weakly autophosphorylated. Phosphorylated at Ser-207 and Thr-211 by the majority of M3Ks, such as MAP3K5/ASK1, MAP3K1/MEKK1, MAP3K2/MEKK2, MAP3K3/MEKK3, MAP3K4/MEKK4, MAP3K7/TAK1, MAP3K11/MLK3 and MAP3K17/TAOK2. In terms of processing, in response to genotoxic stress, MAP3K-phosphorylated MAP2K6 is ubiquitinated and degraded by the SCF(FBXO31) complex. Post-translationally, (Microbial infection) Acetylation of Ser-207 and Thr-211 by Yersinia YopJ prevents phosphorylation and activation, thus blocking the MAPK signaling pathway. In terms of tissue distribution, isoform 2 is only expressed in skeletal muscle. Isoform 1 is expressed in skeletal muscle, heart, and in lesser extent in liver or pancreas.

The protein localises to the nucleus. Its subcellular location is the cytoplasm. It localises to the cytoskeleton. The catalysed reaction is L-seryl-[protein] + ATP = O-phospho-L-seryl-[protein] + ADP + H(+). It catalyses the reaction L-threonyl-[protein] + ATP = O-phospho-L-threonyl-[protein] + ADP + H(+). It carries out the reaction L-tyrosyl-[protein] + ATP = O-phospho-L-tyrosyl-[protein] + ADP + H(+). With respect to regulation, activated by dual phosphorylation on Ser-207 and Thr-211 in response to a variety of cellular stresses, including UV radiation, osmotic shock, hypoxia, inflammatory cytokines, interferon gamma (IFNG), and less often by growth factors. MAP2K6/MKK6 is activated by the majority of M3Ks, such as MAP3K5/ASK1, MAP3K1/MEKK1, MAP3K2/MEKK2, MAP3K3/MEKK3, MAP3K4/MEKK4, MAP3K7/TAK1, MAP3K11/MLK3 and MAP3K17/TAOK2. Functionally, dual specificity protein kinase which acts as an essential component of the MAP kinase signal transduction pathway. With MAP3K3/MKK3, catalyzes the concomitant phosphorylation of a threonine and a tyrosine residue in the MAP kinases p38 MAPK11, MAPK12, MAPK13 and MAPK14 and plays an important role in the regulation of cellular responses to cytokines and all kinds of stresses. Especially, MAP2K3/MKK3 and MAP2K6/MKK6 are both essential for the activation of MAPK11 and MAPK13 induced by environmental stress, whereas MAP2K6/MKK6 is the major MAPK11 activator in response to TNF. MAP2K6/MKK6 also phosphorylates and activates PAK6. The p38 MAP kinase signal transduction pathway leads to direct activation of transcription factors. Nuclear targets of p38 MAP kinase include the transcription factors ATF2 and ELK1. Within the p38 MAPK signal transduction pathway, MAP3K6/MKK6 mediates phosphorylation of STAT4 through MAPK14 activation, and is therefore required for STAT4 activation and STAT4-regulated gene expression in response to IL-12 stimulation. The pathway is also crucial for IL-6-induced SOCS3 expression and down-regulation of IL-6-mediated gene induction; and for IFNG-dependent gene transcription. Has a role in osteoclast differentiation through NF-kappa-B transactivation by TNFSF11, and in endochondral ossification and since SOX9 is another likely downstream target of the p38 MAPK pathway. MAP2K6/MKK6 mediates apoptotic cell death in thymocytes. Acts also as a regulator for melanocytes dendricity, through the modulation of Rho family GTPases. The protein is Dual specificity mitogen-activated protein kinase kinase 6 (MAP2K6) of Homo sapiens (Human).